Consider the following 981-residue polypeptide: Echinoderm microtubule-associated protein-like 4 (981 aa).

Met-1 carries the post-translational modification N-acetylmethionine. 2 disordered regions span residues 1-20 and 57-205; these read MDGFAGSLDDSISAASTSDV and DHVA…PKLI. The segment at 1-249 is microtubule-binding; that stretch reads MDGFAGSLDD…IPSDVDNYDD (249 aa). Residues Ser-7, Ser-13, Ser-16, and Ser-61 each carry the phosphoserine modification. Positions 14-63 form a coiled coil; that stretch reads AASTSDVQDRLSALESRVQQQEDEITVLKAALADVLRRLAISEDHVASVK. At Thr-96 the chain carries Phosphothreonine. Over residues 114–134 the composition is skewed to basic and acidic residues; sequence GTEKKKEKPQGQREKKEESHS. Ser-134 bears the Phosphoserine; by NEK7 mark. The span at 137–155 shows a compositional bias: low complexity; it reads QSPQIRASPSPQPSSQPLQ. Ser-144 carries the post-translational modification Phosphoserine; by NEK6. Ser-146 carries the post-translational modification Phosphoserine; by NEK7. The residue at position 171 (Ser-171) is a Phosphoserine. Basic and acidic residues predominate over residues 176 to 193; sequence SPAEKSHNSWENSDDSRN. The residue at position 200 (Ser-200) is a Phosphoserine. Thr-201 bears the Phosphothreonine mark. At Tyr-226 the chain carries Phosphotyrosine. Phosphothreonine is present on Thr-237. WD repeat units follow at residues 259-297, 301-348, 356-396, 403-438, and 445-484; these read LKLEWAYGYRGKDCRANVYLLPTGKIVYFIASVVVLFNY, TQRH…VWDS, IIGL…VWDW, AEIKTTNEVVLAVEFHPTDANTIITCGKSHIFFWTW, and RKQGIFGKYEKPKFVQCLAFLGNGDVLTGDSGGVMLIWSK. A Phosphothreonine; by NEK6 modification is found at Thr-490. 8 WD repeats span residues 500–538, 543–579, 582–621, 625–662, 668–704, 711–750, 760–818, and 825–864; these read QISKQIKAHDGSVFTLCQMRNGMLLTGGGKDRKIILWDH, EREIEVPDQYGTIRAVAEGKADQFLVGTSRNFILRGT, DGFQIEVQGHTDELWGLATHPFKDLLLTCAQDRQVCLWNS, RLEWTRLVDEPGHCADFHPSGTVVAIGTHSGRWFVLDA, VSIHTDGNEQLSVMRYSIDGTFLAVGSHDNFIYLYVV, YSRYGRCTGHSSYITHLDWSPDNKYIMSNSGDYEILYWDI, RSDC…LFQY, and APSHKYSAHSSHVTNVSFTHNDSHLISTGGKDMSIIQWKL. Position 609 is a phosphothreonine; by NEK6 and NEK7 (Thr-609). Residues 881 to 893 are compositionally biased toward polar residues; it reads LTKAPVSSTESVI. Residues 881-981 are disordered; that stretch reads LTKAPVSSTE…EDQQDPSPSS (101 aa). Residues Ser-891 and Ser-895 each carry the phosphoserine modification. 2 positions are modified to phosphothreonine: Thr-897 and Thr-899. Ser-903 carries the post-translational modification Phosphoserine. The span at 916 to 931 shows a compositional bias: polar residues; that stretch reads ISSSPTLLENSLEQTV. Residues 937-946 are compositionally biased toward acidic residues; the sequence is HSEEESEEGS. Ser-978 carries the post-translational modification Phosphoserine. Ser-981 carries the post-translational modification Phosphoserine; by NEK6 and NEK7.

This sequence belongs to the WD repeat EMAP family. In terms of assembly, homotrimer; self-association is mediated by the N-terminal coiled coil. Interacts (via WD repeats) with NUDC. Interacts with alpha- and beta-tubulin during mitosis. In terms of processing, phosphorylated during mitosis. Phosphorylation at Ser-144 and Ser-146 promotes its dissociation from microtubules during mitosis which is required for efficient chromosome congression.

It is found in the cytoplasm. The protein localises to the cytoskeleton. Its subcellular location is the spindle. It localises to the microtubule organizing center. The protein resides in the midbody. Its function is as follows. Essential for the formation and stability of microtubules (MTs). Required for the organization of the mitotic spindle and for the proper attachment of kinetochores to MTs. Promotes the recruitment of NUDC to the mitotic spindle for mitotic progression. In Homo sapiens (Human), this protein is Echinoderm microtubule-associated protein-like 4 (EML4).